A 1404-amino-acid chain; its full sequence is DNA-directed RNA polymerase subunit beta' (1404 aa).

Zn(2+) is bound by residues Cys70, Cys72, Cys85, and Cys88. The Mg(2+) site is built by Asp460, Asp462, and Asp464. The Zn(2+) site is built by Cys814, Cys889, Cys896, and Cys899.

Belongs to the RNA polymerase beta' chain family. The RNAP catalytic core consists of 2 alpha, 1 beta, 1 beta' and 1 omega subunit. When a sigma factor is associated with the core the holoenzyme is formed, which can initiate transcription. Requires Mg(2+) as cofactor. Zn(2+) serves as cofactor.

It carries out the reaction RNA(n) + a ribonucleoside 5'-triphosphate = RNA(n+1) + diphosphate. DNA-dependent RNA polymerase catalyzes the transcription of DNA into RNA using the four ribonucleoside triphosphates as substrates. The chain is DNA-directed RNA polymerase subunit beta' from Xanthomonas axonopodis pv. citri (strain 306).